We begin with the raw amino-acid sequence, 206 residues long: D-ribitol-5-phosphate phosphatase (206 aa).

D8 acts as the Nucleophile in catalysis. Mg(2+)-binding residues include D8 and D172.

This sequence belongs to the HAD-like hydrolase superfamily. The cofactor is Mg(2+).

The catalysed reaction is D-ribitol 1-phosphate + H2O = ribitol + phosphate. The enzyme catalyses D-ribitol 5-phosphate + H2O = ribitol + phosphate. It catalyses the reaction 5-amino-6-(5-phospho-D-ribitylamino)uracil + H2O = 5-amino-6-(D-ribitylamino)uracil + phosphate. The protein operates within cofactor biosynthesis; riboflavin biosynthesis; 5-amino-6-(D-ribitylamino)uracil from GTP: step 4/4. In terms of biological role, catalyzes the dephosphorylation of D-ribitol-5-phosphate and D-ribitol-1-phosphate. Is also able to dephosphorylate 5-amino-6-(5-phospho-D-ribitylamino)uracil, and thus could be involved in the riboflavin biosynthesis pathway. The protein is D-ribitol-5-phosphate phosphatase of Bacteroides thetaiotaomicron (strain ATCC 29148 / DSM 2079 / JCM 5827 / CCUG 10774 / NCTC 10582 / VPI-5482 / E50).